We begin with the raw amino-acid sequence, 319 residues long: Acyl-coenzyme A thioesterase 8 (319 aa).

The segment at Met-1–Pro-20 is disordered. Residues Asp-232, Ser-254, and Gln-304 each act as charge relay system in the active site. Positions Ser-317 to Leu-319 match the Microbody targeting signal motif.

The protein belongs to the C/M/P thioester hydrolase family. As to quaternary structure, homodimer. In terms of assembly, (Microbial infection) Interacts with human immunodeficiency virus (HIV-1) Nef (via middle region); this interaction enhances ACOT8 Acyl-CoA thioesterase activity and occurs in a Nef myristoylation-independent manner. According to a second report, the interaction with HIV-1 Nef occurs in a Nef myristoylation-independent manner but does not enhance ACOT8 Acyl-CoA thioesterase activity. As to expression, detected in a T-cell line (at protein level). Ubiquitous.

It localises to the peroxisome matrix. The catalysed reaction is choloyl-CoA + H2O = cholate + CoA + H(+). It carries out the reaction chenodeoxycholoyl-CoA + H2O = chenodeoxycholate + CoA + H(+). It catalyses the reaction acetyl-CoA + H2O = acetate + CoA + H(+). The enzyme catalyses butanoyl-CoA + H2O = butanoate + CoA + H(+). The catalysed reaction is 2-methylpropanoyl-CoA + H2O = 2-methylpropanoate + CoA + H(+). It carries out the reaction hexanoyl-CoA + H2O = hexanoate + CoA + H(+). It catalyses the reaction octanoyl-CoA + H2O = octanoate + CoA + H(+). The enzyme catalyses decanoyl-CoA + H2O = decanoate + CoA + H(+). The catalysed reaction is dodecanoyl-CoA + H2O = dodecanoate + CoA + H(+). It carries out the reaction tetradecanoyl-CoA + H2O = tetradecanoate + CoA + H(+). It catalyses the reaction hexadecanoyl-CoA + H2O = hexadecanoate + CoA + H(+). The enzyme catalyses octadecanoyl-CoA + H2O = octadecanoate + CoA + H(+). The catalysed reaction is malonyl-CoA + H2O = malonate + CoA + H(+). It carries out the reaction acetoacetyl-CoA + H2O = acetoacetate + CoA + H(+). It catalyses the reaction propanoyl-CoA + H2O = propanoate + CoA + H(+). The enzyme catalyses succinyl-CoA + H2O = succinate + CoA + H(+). The catalysed reaction is glutaryl-CoA + H2O = glutarate + CoA + H(+). It carries out the reaction hexanedioyl-CoA + H2O = hexanedioate + CoA + H(+). It catalyses the reaction octanedioyl-CoA + H2O = octanedioate + CoA + H(+). The enzyme catalyses decanedioyl-CoA + H2O = decanedioate + CoA + H(+). The catalysed reaction is dodecanedioyl-CoA + H2O = dodecanedioate + CoA + H(+). It carries out the reaction (9Z)-tetradecenoyl-CoA + H2O = (9Z)-tetradecenoate + CoA + H(+). It catalyses the reaction (9Z)-hexadecenoyl-CoA + H2O = (9Z)-hexadecenoate + CoA + H(+). The enzyme catalyses (9Z)-octadecenoyl-CoA + H2O = (9Z)-octadecenoate + CoA + H(+). The catalysed reaction is (9Z,12Z)-octadecadienoyl-CoA + H2O = (9Z,12Z)-octadecadienoate + CoA + H(+). It carries out the reaction eicosanoyl-CoA + H2O = eicosanoate + CoA + H(+). It catalyses the reaction (5Z,8Z,11Z,14Z)-eicosatetraenoyl-CoA + H2O = (5Z,8Z,11Z,14Z)-eicosatetraenoate + CoA + H(+). The enzyme catalyses 4,8-dimethylnonanoyl-CoA + H2O = 4,8-dimethylnonanoate + CoA + H(+). The catalysed reaction is 2,6-dimethylheptanoyl-CoA + H2O = 2,6-dimethylheptanoate + CoA + H(+). It carries out the reaction (3S)-3-hydroxy-3-methylglutaryl-CoA + H2O = 3-hydroxy-3-methylglutarate + CoA + H(+). It catalyses the reaction 3alpha,7alpha,12alpha-trihydroxy-5beta-cholestan-26-oyl-CoA + H2O = 3alpha,7alpha,12alpha-trihydroxy-5beta-cholestan-26-oate + CoA + H(+). The enzyme catalyses 2-methyloctadecanoyl-CoA + H2O = 2-methyloctadecanoate + CoA + H(+). The catalysed reaction is prostaglandin F2alpha-CoA + H2O = prostaglandin F2alpha + CoA + H(+). Its pathway is lipid metabolism; fatty acid metabolism. Its activity is regulated as follows. Inhibited by CoASH (IC(50)=10-15 uM). Also inhibited by cysteine-reactive agents. Catalyzes the hydrolysis of acyl-CoAs into free fatty acids and coenzyme A (CoASH), regulating their respective intracellular levels. Displays no strong substrate specificity with respect to the carboxylic acid moiety of Acyl-CoAs. Hydrolyzes medium length (C2 to C20) straight-chain, saturated and unsaturated acyl-CoAS but is inactive towards substrates with longer aliphatic chains. Moreover, it catalyzes the hydrolysis of CoA esters of bile acids, such as choloyl-CoA and chenodeoxycholoyl-CoA and competes with bile acid CoA:amino acid N-acyltransferase (BAAT). Is also able to hydrolyze CoA esters of dicarboxylic acids. It is involved in the metabolic regulation of peroxisome proliferation. Its function is as follows. (Microbial infection) May mediate Nef-induced down-regulation of CD4 cell-surface expression. This chain is Acyl-coenzyme A thioesterase 8 (ACOT8), found in Homo sapiens (Human).